The primary structure comprises 469 residues: Glutamine synthetase (469 aa).

The GS beta-grasp domain maps to 12–97; that stretch reads HDVKWVDLRF…LVCDIIEPST (86 aa). Residues 105-469 enclose the GS catalytic domain; sequence PRNIAKRAEE…PLEYDLYYSV (365 aa). Mg(2+) is bound by residues glutamate 130 and glutamate 132. Glutamate 208 is an ATP binding site. Positions 213 and 221 each coordinate Mg(2+). Residues 265–266 and glycine 266 each bind L-glutamate; that span reads NG. Residue histidine 270 participates in Mg(2+) binding. ATP is bound by residues 272–274 and serine 274; that span reads HMS. 3 residues coordinate L-glutamate: arginine 322, glutamate 328, and arginine 340. ATP is bound by residues arginine 340, arginine 345, and lysine 353. Glutamate 358 is a Mg(2+) binding site. Arginine 360 contributes to the L-glutamate binding site. O-AMP-tyrosine is present on tyrosine 398.

This sequence belongs to the glutamine synthetase family. As to quaternary structure, oligomer of 12 subunits arranged in the form of two hexameric ring. Mg(2+) is required as a cofactor.

It is found in the cytoplasm. The catalysed reaction is L-glutamate + NH4(+) + ATP = L-glutamine + ADP + phosphate + H(+). The activity of this enzyme could be controlled by adenylation under conditions of abundant glutamine. In terms of biological role, catalyzes the ATP-dependent biosynthesis of glutamine from glutamate and ammonia. The protein is Glutamine synthetase of Pseudomonas aeruginosa (strain ATCC 15692 / DSM 22644 / CIP 104116 / JCM 14847 / LMG 12228 / 1C / PRS 101 / PAO1).